The chain runs to 770 residues: Probable methyltransferase PMT25 (770 aa).

Topologically, residues 1–17 (MAMGKYSRVDGKKSSSY) are cytoplasmic. The chain crosses the membrane as a helical; Signal-anchor for type II membrane protein span at residues 18 to 38 (GLTITIVLLLSLCLVGTWMFM). Topologically, residues 39-770 (SSWSAPADSA…ETETIKSAIA (732 aa)) are lumenal. The disordered stretch occupies residues 44 to 238 (PADSAGYSST…SSISKDQSSY (195 aa)). Residues 55–79 (TAKDVSKNDLRKEEGDRDPKNFSDE) show a composition bias toward basic and acidic residues. Residues Asn-75 and Asn-107 are each glycosylated (N-linked (GlcNAc...) asparagine). The segment covering 92–109 (QVKTDSENSAEGNQVNES) has biased composition (polar residues). Basic and acidic residues-rich tracts occupy residues 110–124 (SGEK…KESD) and 131–177 (DGEK…KAEE). 2 N-linked (GlcNAc...) asparagine glycosylation sites follow: Asn-163 and Asn-178. Polar residues-rich tracts occupy residues 205–220 (ESST…LVES) and 227–238 (QQSSISKDQSSY). Asn-244 and Asn-363 each carry an N-linked (GlcNAc...) asparagine glycan.

Belongs to the methyltransferase superfamily.

Its subcellular location is the golgi apparatus membrane. The sequence is that of Probable methyltransferase PMT25 from Arabidopsis thaliana (Mouse-ear cress).